We begin with the raw amino-acid sequence, 123 residues long: Large ribosomal subunit protein bL12 (123 aa).

Belongs to the bacterial ribosomal protein bL12 family. As to quaternary structure, homodimer. Part of the ribosomal stalk of the 50S ribosomal subunit. Forms a multimeric L10(L12)X complex, where L10 forms an elongated spine to which 2 to 4 L12 dimers bind in a sequential fashion. Binds GTP-bound translation factors.

Its function is as follows. Forms part of the ribosomal stalk which helps the ribosome interact with GTP-bound translation factors. Is thus essential for accurate translation. The sequence is that of Large ribosomal subunit protein bL12 from Chlorobium luteolum (strain DSM 273 / BCRC 81028 / 2530) (Pelodictyon luteolum).